The primary structure comprises 273 residues: Transmembrane epididymal protein 1 (273 aa).

The next 6 helical transmembrane spans lie at 34 to 54, 72 to 92, 96 to 116, 129 to 149, 158 to 178, and 195 to 215; these read IVTGSLLTFYVVLCLDGGMVL, LTMFILLTLNGCVDFMSKNVL, CVGLEKGTLVLIIYELLLLMV, VYSLLILVVFLLLLVLTAELW, LMETFLILMMGSWLMQAGFIL, and IMFVTTFFCWHVMINASFLLG.

Belongs to the TMEM45 family.

The protein localises to the membrane. The polypeptide is Transmembrane epididymal protein 1 (TEDDM1) (Homo sapiens (Human)).